Consider the following 379-residue polypeptide: Succinyl-diaminopimelate desuccinylase (379 aa).

His-70 contacts Zn(2+). Asp-72 is an active-site residue. Asp-103 is a Zn(2+) binding site. The active-site Proton acceptor is Glu-137. Zn(2+)-binding residues include Glu-138, Glu-166, and His-352.

This sequence belongs to the peptidase M20A family. DapE subfamily. In terms of assembly, homodimer. Zn(2+) is required as a cofactor. Co(2+) serves as cofactor.

It carries out the reaction N-succinyl-(2S,6S)-2,6-diaminopimelate + H2O = (2S,6S)-2,6-diaminopimelate + succinate. The protein operates within amino-acid biosynthesis; L-lysine biosynthesis via DAP pathway; LL-2,6-diaminopimelate from (S)-tetrahydrodipicolinate (succinylase route): step 3/3. In terms of biological role, catalyzes the hydrolysis of N-succinyl-L,L-diaminopimelic acid (SDAP), forming succinate and LL-2,6-diaminopimelate (DAP), an intermediate involved in the bacterial biosynthesis of lysine and meso-diaminopimelic acid, an essential component of bacterial cell walls. This Burkholderia cenocepacia (strain ATCC BAA-245 / DSM 16553 / LMG 16656 / NCTC 13227 / J2315 / CF5610) (Burkholderia cepacia (strain J2315)) protein is Succinyl-diaminopimelate desuccinylase.